The following is a 347-amino-acid chain: Probable replication factor C subunit 3 (347 aa).

It belongs to the activator 1 small subunits family. As to quaternary structure, heteropentamer of various rfc subunits that forms a complex (RFC) with PCNA in the presence of ATP.

Its subcellular location is the nucleus. In terms of biological role, the elongation of primed DNA templates by DNA polymerase delta and epsilon requires the action of the accessory proteins PCNA and activator 1. This Dictyostelium discoideum (Social amoeba) protein is Probable replication factor C subunit 3 (rfc3).